Reading from the N-terminus, the 303-residue chain is Deoxyhypusine hydroxylase (303 aa).

HEAT-like PBS-type repeat units lie at residues 56-82 and 89-115; these read LKHELAYCLGQMKDRRALPVLKQVLQD and VRHEAGEALGAIGDPEVLELLREYAQD. The Fe cation site is built by His-58, His-91, and Glu-92. The interval 139 to 158 is disordered; sequence DSPDTNPYLSVDPAPPAEEK. HEAT-like PBS-type repeat units follow at residues 176 to 202, 207 to 233, and 240 to 266; these read HRYRAMFALRNIGGEEAVLALADGLQI, FRHEIGYVLGQMQHKAAVPGLSAALER, and VRHECAEALGSIAHEDCLKALRAHVGD. Residues His-209, His-242, and Glu-243 each coordinate Fe cation.

Belongs to the deoxyhypusine hydroxylase family. Requires Fe(2+) as cofactor.

The catalysed reaction is [eIF5A protein]-deoxyhypusine + AH2 + O2 = [eIF5A protein]-hypusine + A + H2O. Its pathway is protein modification; eIF5A hypusination. Its function is as follows. Catalyzes the hydroxylation of the N(6)-(4-aminobutyl)-L-lysine intermediate produced by deoxyhypusine synthase/DHPS on a critical lysine of the eukaryotic translation initiation factor 5A/eIF-5A. This is the second step of the post-translational modification of that lysine into an unusual amino acid residue named hypusine. Hypusination is unique to mature eIF-5A factor and is essential for its function. This Xenopus laevis (African clawed frog) protein is Deoxyhypusine hydroxylase (dohh).